Consider the following 469-residue polypeptide: MAMKAPDPGGSGEILPSTPSLSETTSGGAAAASKSAQLPSSSSDIDNIHVPSYSSWFSWTDINDCEVRSLPEFFDSRSSSKNPKFYLYLRNSIIKQYRDDHPRKISFTDVRRTLVSDVVSIRRVFDFLDSWGLINYNSSASAKPLKWEEKEAGKSAGDAASEPATTVKETAKRNCNGCKAICSIACFACDKYDLTLCARCYVRSNYRVGINSSEFKRVEISEESKPEWSDKEILLLLEAVMHYGDDWKKVASHVIGRTEKDCVSQFVKLPFGEQFVKESDSEDGLEMFDQIKDSDIPESEGIDKDGSSPNKRIKLTPLADASNPIMAQAAFLSALAGTNVAEAAARAAVRALSDVDYEADKNASRDPNRQDANAASSGETTRNESERAWADAKSLIEKEEHEVEGAIKETVEVEMKKIRDRIVHFEKLDLEMERSRKQLEEVRNLLFVDQLNIFFHTRKARKTEDRIEC.

Positions 1 to 42 are disordered; that stretch reads MAMKAPDPGGSGEILPSTPSLSETTSGGAAAASKSAQLPSSS. Residues 15–42 show a composition bias toward low complexity; it reads LPSTPSLSETTSGGAAAASKSAQLPSSS. The SWIRM domain occupies 48 to 145; sequence IHVPSYSSWF…YNSSASAKPL (98 aa). Positions 223-274 constitute an SANT domain; the sequence is ESKPEWSDKEILLLLEAVMHYGDDWKKVASHVIGRTEKDCVSQFVKLPFGEQ. Composition is skewed to basic and acidic residues over residues 293–306 and 360–369; these read DSDI…DKDG and DKNASRDPNR. Disordered regions lie at residues 293-314 and 360-387; these read DSDI…KRIK and DKNA…ESER. Polar residues predominate over residues 370-380; sequence QDANAASSGET. Positions 423–447 form a coiled coil; sequence VHFEKLDLEMERSRKQLEEVRNLLF.

As to quaternary structure, homodimers and heterodimers. Interacts with SWI3A, SWI3C, SWI3D, BSH, BRM and FCA (via C-terminus), and (via N-terminus) with HAB1. Interacts with MORC6 and SUVH9. Expressed in roots, stems, leaves, flowers and siliques.

It localises to the nucleus. In terms of biological role, component of a multiprotein complex equivalent of the SWI/SNF complex, an ATP-dependent chromatin-remodeling complex, which is required for the positive and negative regulation of gene expression of a large number of genes. It changes chromatin structure by altering DNA-histone contacts within a nucleosome, leading eventually to a change in nucleosome position, thus facilitating or repressing binding of gene-specific transcription factors. May play an essential role in the transition from the vegetative to the reproductive phase of development. May be a positive regulator of ABA signaling. In Arabidopsis thaliana (Mouse-ear cress), this protein is SWI/SNF complex subunit SWI3B (SWI3B).